The sequence spans 435 residues: Serine--tRNA ligase (435 aa).

237 to 239 (TAE) contributes to the L-serine binding site. An ATP-binding site is contributed by 268–270 (RSE). An L-serine-binding site is contributed by Glu-291. ATP is bound at residue 355–358 (EISS). Ser-390 lines the L-serine pocket.

Belongs to the class-II aminoacyl-tRNA synthetase family. Type-1 seryl-tRNA synthetase subfamily. In terms of assembly, homodimer. The tRNA molecule binds across the dimer.

Its subcellular location is the cytoplasm. The enzyme catalyses tRNA(Ser) + L-serine + ATP = L-seryl-tRNA(Ser) + AMP + diphosphate + H(+). It catalyses the reaction tRNA(Sec) + L-serine + ATP = L-seryl-tRNA(Sec) + AMP + diphosphate + H(+). Its pathway is aminoacyl-tRNA biosynthesis; selenocysteinyl-tRNA(Sec) biosynthesis; L-seryl-tRNA(Sec) from L-serine and tRNA(Sec): step 1/1. In terms of biological role, catalyzes the attachment of serine to tRNA(Ser). Is also able to aminoacylate tRNA(Sec) with serine, to form the misacylated tRNA L-seryl-tRNA(Sec), which will be further converted into selenocysteinyl-tRNA(Sec). The sequence is that of Serine--tRNA ligase from Lactobacillus delbrueckii subsp. bulgaricus (strain ATCC BAA-365 / Lb-18).